The chain runs to 426 residues: D-tagatose-1,6-bisphosphate aldolase subunit KbaZ (426 aa).

Belongs to the GatZ/KbaZ family. KbaZ subfamily. As to quaternary structure, forms a complex with KbaY.

The protein operates within carbohydrate metabolism; D-tagatose 6-phosphate degradation; D-glyceraldehyde 3-phosphate and glycerone phosphate from D-tagatose 6-phosphate: step 2/2. Its function is as follows. Component of the tagatose-1,6-bisphosphate aldolase KbaYZ that is required for full activity and stability of the Y subunit. Could have a chaperone-like function for the proper and stable folding of KbaY. When expressed alone, KbaZ does not show any aldolase activity. The sequence is that of D-tagatose-1,6-bisphosphate aldolase subunit KbaZ from Escherichia coli O1:K1 / APEC.